A 1389-amino-acid polypeptide reads, in one-letter code: Carboxypeptidase D (1389 aa).

The N-terminal stretch at methionine 1–alanine 25 is a signal peptide. Topologically, residues histidine 26–glutamate 1308 are extracellular. One can recognise a Peptidase M14 1 domain in the interval arginine 46–valine 383. The interval leucine 95–lysine 133 is disordered. Basic and acidic residues predominate over residues proline 96–glutamate 108. The span at glutamate 109–glutamate 120 shows a compositional bias: acidic residues. Residues histidine 139 and glutamate 142 each contribute to the Zn(2+) site. Asparagine 172 carries an N-linked (GlcNAc...) asparagine glycan. Residues glutamate 188–leucine 235 are disordered. The segment covering cysteine 195–proline 209 has biased composition (gly residues). The span at glycine 210–asparagine 221 shows a compositional bias: basic and acidic residues. Asparagine 221 carries an N-linked (GlcNAc...) asparagine glycan. Position 260 (histidine 260) interacts with Zn(2+). The Proton donor/acceptor role is filled by glutamate 353. 4 N-linked (GlcNAc...) asparagine glycosylation sites follow: asparagine 402, asparagine 413, asparagine 432, and asparagine 472. Positions arginine 511–valine 801 constitute a Peptidase M14 2 domain. Zn(2+) is bound by residues histidine 573 and glutamate 576. The interval serine 614–asparagine 639 is disordered. Residues glycine 619–arginine 628 are compositionally biased toward basic and acidic residues. N-linked (GlcNAc...) asparagine glycosylation occurs at asparagine 635. Histidine 680 is a Zn(2+) binding site. Residue glutamate 771 is the Proton donor/acceptor of the active site. N-linked (GlcNAc...) asparagine glycosylation is found at asparagine 820, asparagine 876, asparagine 958, asparagine 981, asparagine 1073, and asparagine 1151. The Peptidase M14 3 domain occupies arginine 935–valine 1220. The chain crosses the membrane as a helical span at residues leucine 1309 to tryptophan 1329. S-palmitoyl cysteine attachment occurs at residues cysteine 1326, cysteine 1330, and cysteine 1332. The Cytoplasmic portion of the chain corresponds to cysteine 1330–histidine 1389. Residues serine 1367–histidine 1389 are disordered.

This sequence belongs to the peptidase M14 family. In terms of assembly, binds to pre-S, hepatitis B virus large envelope protein, via the carboxypeptidase-like domain. Zn(2+) is required as a cofactor. Post-translationally, the N-terminus is blocked. Expressed in liver, lung, kidney, heart, stomach, pancreas, spleen, gall bladder and intestine, but not in skeletal muscle.

Its subcellular location is the cell membrane. The catalysed reaction is Releases C-terminal Arg and Lys from polypeptides.. The protein is Carboxypeptidase D (CPD) of Anas platyrhynchos (Mallard).